Here is an 86-residue protein sequence, read N- to C-terminus: U2-sicaritoxin-Li1b (86 aa).

An N-terminal signal peptide occupies residues 1–20 (MKIELFLVVIFALAIHMATA). Positions 21–33 (EEVIESDIEPAER) are excised as a propeptide. Disulfide bonds link C35–C53, C42–C62, C52–C71, and C64–C69. Residue K85 is modified to Lysine amide.

It belongs to the neurotoxin 39 family. In terms of tissue distribution, expressed by the venom gland.

It is found in the secreted. In terms of biological role, toxin active against S.frugiperda larvae. May act on sodium channels (Nav). In Loxosceles intermedia (Brown spider), this protein is U2-sicaritoxin-Li1b.